Consider the following 1344-residue polypeptide: Period circadian protein homolog 2 (1344 aa).

2 disordered regions span residues 1–21 (MDCIEVRGFYSSTEEQNPEQQ) and 42–112 (EYSG…NGKD). Polar residues predominate over residues 10-21 (YSSTEEQNPEQQ). Over residues 78–89 (SSGSSGNDFSGN) the composition is skewed to low complexity. The segment covering 99–111 (HDSHGHESDENGK) has biased composition (basic and acidic residues). The short motif at 161 to 170 (LLKTLQELKA) is the Nuclear export signal 1 element. In terms of domain architecture, PAS 1 spans 231 to 298 (ITSEYIMKNA…FYTSTTPYRL (68 aa)). Residues 358-362 (LCCVL) carry the LXXLL motif. The PAS 2 domain maps to 371 to 437 (YEAPRIPPDK…MLAIHKKILQ (67 aa)). One can recognise a PAC domain in the interval 445–488 (YSPIRFCTRNGDYITMDTSWSSFINPWSRKVSFIIGRHKVRTGP). The Nuclear export signal 2 signature appears at 512–521 (ITEQIYRLLL). 5 disordered regions span residues 531 to 609 (GYGS…QVKD), 661 to 686 (AKRKCEPSSSVNSSVHEQKASVNAIQ), 823 to 894 (LQDK…WSPS), 1038 to 1065 (TETRNEPSRSCTPQSVGPQDQASPPLFQ), and 1107 to 1126 (TTDAGSGKGSLPAESPMDAQ). A compositionally biased stretch (low complexity) spans 549-559 (SSSDSTGNNND). Basic and acidic residues-rich tracts occupy residues 560–573 (DTQKDKTISQDARK) and 583–597 (TENKGKLEYKREPSA). Residues 667 to 684 (PSSSVNSSVHEQKASVNA) are compositionally biased toward polar residues. A compositionally biased stretch (basic and acidic residues) spans 825 to 836 (DKPKGRPGERGG). Residues 851 to 865 (KKSGKNRKSKRIKPQ) carry the Nuclear localization signal motif. The span at 852-862 (KSGKNRKSKRI) shows a compositional bias: basic residues. Composition is skewed to polar residues over residues 865–875 (QESSDSTTSGT), 885–894 (GLNTTAWSPS), and 1045–1059 (SRSCTPQSVGPQDQA). The LXXLL signature appears at 1138–1142 (LDILL). The segment covering 1149-1172 (GTGSASSGSGVSAAAESLGSGSNG) has biased composition (low complexity). The segment at 1149 to 1197 (GTGSASSGSGVSAAAESLGSGSNGCDMSGSRTGSSETSHTSKYFGSIDS) is disordered. The span at 1177–1197 (GSRTGSSETSHTSKYFGSIDS) shows a compositional bias: polar residues. Residues 1244 to 1344 (SRDLETVLKE…PLSQVNEEQT (101 aa)) form a CRY binding domain region.

In terms of assembly, component of the circadian clock oscillator which includes the CRY proteins, CLOCK or NPAS2, BMAL1 or BMAL2, CSNK1E, and the PER proteins. Interacts directly with PER3, and through a C-terminal domain, with CRY1 and CRY2.

It localises to the nucleus. The protein localises to the cytoplasm. In terms of biological role, transcriptional repressor which forms a core component of the circadian clock. The circadian clock, an internal time-keeping system, regulates various physiological processes through the generation of approximately 24 hour circadian rhythms in gene expression, which are translated into rhythms in metabolism and behavior. It is derived from the Latin roots 'circa' (about) and 'diem' (day) and acts as an important regulator of a wide array of physiological functions including metabolism, sleep, body temperature, blood pressure, endocrine, immune, cardiovascular, and renal function. Consists of two major components: the central clock, residing in the suprachiasmatic nucleus (SCN) of the brain, and the peripheral clocks that are present in nearly every tissue and organ system. Both the central and peripheral clocks can be reset by environmental cues, also known as Zeitgebers (German for 'timegivers'). The predominant Zeitgeber for the central clock is light, which is sensed by retina and signals directly to the SCN. The central clock entrains the peripheral clocks through neuronal and hormonal signals, body temperature and feeding-related cues, aligning all clocks with the external light/dark cycle. Circadian rhythms allow an organism to achieve temporal homeostasis with its environment at the molecular level by regulating gene expression to create a peak of protein expression once every 24 hours to control when a particular physiological process is most active with respect to the solar day. Transcription and translation of core clock components (CLOCK, NPAS2, BMAL1, BMAL2, PER1, PER2, PER3, CRY1 and CRY2) plays a critical role in rhythm generation, whereas delays imposed by post-translational modifications (PTMs) are important for determining the period (tau) of the rhythms (tau refers to the period of a rhythm and is the length, in time, of one complete cycle). A diurnal rhythm is synchronized with the day/night cycle, while the ultradian and infradian rhythms have a period shorter and longer than 24 hours, respectively. Disruptions in the circadian rhythms contribute to the pathology of cardiovascular diseases, cancer, metabolic syndrome and aging. A transcription/translation feedback loop (TTFL) forms the core of the molecular circadian clock mechanism. Transcription factors, CLOCK or NPAS2 and BMAL1 or BMAL2, form the positive limb of the feedback loop, act in the form of a heterodimer and activate the transcription of core clock genes and clock-controlled genes (involved in key metabolic processes), harboring E-box elements (5'-CACGTG-3') within their promoters. The core clock genes: PER1/2/3 and CRY1/2 which are transcriptional repressors form the negative limb of the feedback loop and interact with the CLOCK|NPAS2-BMAL1|BMAL2 heterodimer inhibiting its activity and thereby negatively regulating their own expression. This heterodimer also activates nuclear receptors NR1D1/2 and RORA/B/G, which form a second feedback loop and which activate and repress BMAL1 transcription, respectively. PER1 and PER2 proteins transport CRY1 and CRY2 into the nucleus with appropriate circadian timing, but also contribute directly to repression of clock-controlled target genes through interaction with several classes of RNA-binding proteins, helicases and others transcriptional repressors. PER appears to regulate circadian control of transcription by at least three different modes. First, interacts directly with the CLOCK-BMAL1 at the tail end of the nascent transcript peak to recruit complexes containing the SIN3-HDAC that remodel chromatin to repress transcription. Second, brings H3K9 methyltransferases such as SUV39H1 and SUV39H2 to the E-box elements of the circadian target genes, like PER2 itself or PER1. The recruitment of each repressive modifier to the DNA seems to be very precisely temporally orchestrated by the large PER complex, the deacetylases acting before than the methyltransferases. Additionally, large PER complexes are also recruited to the target genes 3' termination site through interactions with RNA-binding proteins and helicases that may play a role in transcription termination to regulate transcription independently of CLOCK-BMAL1 interactions. In Gallus gallus (Chicken), this protein is Period circadian protein homolog 2 (PER2).